Here is an 80-residue protein sequence, read N- to C-terminus: Serine palmitoyltransferase small subunit B (80 aa).

At 1-11 (MDMKNMREYMS) the chain is on the cytoplasmic side. The helical transmembrane segment at 12-29 (WLYYQYLLITGIYVLEPW) threads the bilayer. Topologically, residues 30 to 36 (EQSIFNT) are lumenal. Residues 37–57 (VLFTMVAMVIYTSYVFVPIHV) traverse the membrane as a helical segment. At 58–80 (RLALEFFCELVGGQPESTVALMT) the chain is on the cytoplasmic side.

Belongs to the SPTSS family. SPTSSB subfamily. As to quaternary structure, component of the serine palmitoyltransferase (SPT) complex, which is composed of SPTLC1, SPTLC2 or SPTLC3 and SPTSSA or SPTSSB. The heterodimer consisting of SPTLC1 and SPTLC2/SPTLC3 forms the catalytic core of the enzyme, while SPTSSA or SPTSSB subunits determine substrate specificity. SPT also interacts with ORMDL proteins, especially ORMDL3, which negatively regulate SPT activity in the presence of ceramides.

The protein resides in the endoplasmic reticulum membrane. The protein operates within lipid metabolism; sphingolipid metabolism. Component of the serine palmitoyltransferase multisubunit enzyme (SPT) that catalyzes the initial and rate-limiting step in sphingolipid biosynthesis by condensing L-serine and activated acyl-CoA (most commonly palmitoyl-CoA) to form long-chain bases. The SPT complex is composed of SPTLC1, SPTLC2 or SPTLC3 and SPTSSA or SPTSSB. Within this complex, the heterodimer consisting of SPTLC1 and SPTLC2/SPTLC3 forms the catalytic core. Within the SPT complex, SPTSSB stimulates the catalytic activity and plays a role in substrate specificity. SPT complexes with this subunit showing a preference for longer acyl-CoAs. The SPTLC1-SPTLC2-SPTSSB complex shows a strong preference for C18-CoA substrate, while the SPTLC1-SPTLC3-SPTSSB isozyme displays an ability to use a broader range of acyl-CoAs, without apparent preference. The protein is Serine palmitoyltransferase small subunit B (sptssb) of Danio rerio (Zebrafish).